The chain runs to 413 residues: MSDFIFTSESVTEGHPDKICDQISDAVLDALLTEDPESRVACETVVNTGLCLLTGEITSKAKVDYIKLVRNVIKEIGYEGYKAGGFDANSCAVLVALDEQSPDISQGVNEADDVNDDLEDNTGAGDQGIMFGYACDETPELMPLPISLAHRLAIQLAKVRHENLLNYLLPDGKTQVSIDYEKGLPVSINTILISTQHNPEIDGLTNEEEIRQRIKEDLWKHVVIPATEDLEIKPNIIKTRFLVNPTGKFVVGGPQGDAGLTGRKIIVDTYGGYARHGGGAFSGKDPTKVDRSAAYAARYVAKSIVKAKLAKKAEVQLSYAIGVAKPISILVDTFDTGVISQANLTELIKKYFDLRPAAIIKEFDLRNLPQKMGGKFFRKTASYGHFGRRDLDLPWEKVEEKAAQLAEASKVFL.

His-15 lines the ATP pocket. Asp-17 contacts Mg(2+). Glu-43 contacts K(+). Glu-56 and Gln-100 together coordinate L-methionine. Positions 100 to 110 (QSPDISQGVNE) are flexible loop. ATP-binding positions include 171–173 (DGK), 248–249 (KF), Asp-257, 263–264 (RK), Ala-280, and Lys-284. Asp-257 lines the L-methionine pocket. Lys-288 lines the L-methionine pocket.

The protein belongs to the AdoMet synthase family. As to quaternary structure, homotetramer; dimer of dimers. It depends on Mg(2+) as a cofactor. The cofactor is K(+).

The protein resides in the cytoplasm. It carries out the reaction L-methionine + ATP + H2O = S-adenosyl-L-methionine + phosphate + diphosphate. The protein operates within amino-acid biosynthesis; S-adenosyl-L-methionine biosynthesis; S-adenosyl-L-methionine from L-methionine: step 1/1. In terms of biological role, catalyzes the formation of S-adenosylmethionine (AdoMet) from methionine and ATP. The overall synthetic reaction is composed of two sequential steps, AdoMet formation and the subsequent tripolyphosphate hydrolysis which occurs prior to release of AdoMet from the enzyme. The protein is S-adenosylmethionine synthase of Prochlorococcus marinus (strain MIT 9215).